The chain runs to 375 residues: Queuine tRNA-ribosyltransferase (375 aa).

The active-site Proton acceptor is the aspartate 89. Residues 89–93 (DSGGF), aspartate 143, glutamine 187, and glycine 214 each bind substrate. Positions 245-251 (GVGKPED) are RNA binding. The active-site Nucleophile is the aspartate 264. The interval 269–273 (TRNAR) is RNA binding; important for wobble base 34 recognition. Residues cysteine 302, cysteine 304, cysteine 307, and histidine 333 each coordinate Zn(2+).

It belongs to the queuine tRNA-ribosyltransferase family. As to quaternary structure, homodimer. Within each dimer, one monomer is responsible for RNA recognition and catalysis, while the other monomer binds to the replacement base PreQ1. Requires Zn(2+) as cofactor.

The catalysed reaction is 7-aminomethyl-7-carbaguanine + guanosine(34) in tRNA = 7-aminomethyl-7-carbaguanosine(34) in tRNA + guanine. Its pathway is tRNA modification; tRNA-queuosine biosynthesis. Catalyzes the base-exchange of a guanine (G) residue with the queuine precursor 7-aminomethyl-7-deazaguanine (PreQ1) at position 34 (anticodon wobble position) in tRNAs with GU(N) anticodons (tRNA-Asp, -Asn, -His and -Tyr). Catalysis occurs through a double-displacement mechanism. The nucleophile active site attacks the C1' of nucleotide 34 to detach the guanine base from the RNA, forming a covalent enzyme-RNA intermediate. The proton acceptor active site deprotonates the incoming PreQ1, allowing a nucleophilic attack on the C1' of the ribose to form the product. After dissociation, two additional enzymatic reactions on the tRNA convert PreQ1 to queuine (Q), resulting in the hypermodified nucleoside queuosine (7-(((4,5-cis-dihydroxy-2-cyclopenten-1-yl)amino)methyl)-7-deazaguanosine). This is Queuine tRNA-ribosyltransferase from Salmonella choleraesuis (strain SC-B67).